The following is a 622-amino-acid chain: Prothrombin (622 aa).

A signal peptide spans 1–24 (MAHVRGLQLPGCLALAALCSLVHS). Positions 25 to 43 (QHVFLAPQQARSLLQRVRR) are excised as a propeptide. Residues 44–89 (ANTFLEEVRKGNLERECVEETCSYEEAFEALESSTATDVFWAKYTA) form the Gla domain. 4-carboxyglutamate occurs at positions 49, 50, 57, 59, 62, 63, 68, 69, 72, and 75. C60 and C65 are joined by a disulfide. Intrachain disulfides connect C90–C103, C108–C186, C129–C169, C157–C181, C213–C291, C234–C274, C262–C286, C336–C482, C391–C407, C536–C550, and C564–C594. 2 consecutive Kringle domains span residues 108 to 186 (CAEG…IPVC) and 213 to 291 (CVPD…LNYC). N121 and N143 each carry an N-linked (GlcNAc...) (complex) asparagine glycan. The Peptidase S1 domain occupies 364–618 (IVEGSDAEIG…LKKWIQKVID (255 aa)). H406 (charge relay system) is an active-site residue. The N-linked (GlcNAc...) (complex) asparagine glycan is linked to N416. The active-site Charge relay system is the D462. The segment at 551 to 573 (AGYKPDEGKRGDACEGDSGGPFV) is high affinity receptor-binding region which is also known as the TP508 peptide. Residue S568 is the Charge relay system of the active site.

This sequence belongs to the peptidase S1 family. In terms of assembly, heterodimer (named alpha-thrombin) of a light and a heavy chain; disulfide-linked. Forms a heterodimer with SERPINA5. In plasma, interacts (via N-terminus) with alpha-1-microglobulin with molar ratio 1:2 and 1:1; this interaction does not prevent the activation of prothrombin to thrombin. Interacts (thrombin) with iripin-8, a serine protease inhibitor from Ixodes ricinus saliva. Interacts (thrombin) with iripin-3, a serine protease inhibitor from Ixodes ricinus saliva. Interacts (thrombin) with Anopheles albimanus salivary thrombin inhibitor anophelin; the interaction results in thrombin inhibition. Interacts (thrombin) with Anopheles gambiae salivary thrombin inhibitor anophelin; the interaction results in thrombin inhibition. Interacts (thrombin) with Amblyomma variegatum variegin; the interaction results in thrombin inhibition. Interacts (thrombin) with Xenopsylla cheopis salivary thrombin inhibitor XC-42. Interacts (thrombin) with Xenopsylla cheopis salivary thrombin inhibitor XC-43. In terms of processing, the gamma-carboxyglutamyl residues, which bind calcium ions, result from the carboxylation of glutamyl residues by a microsomal enzyme, the vitamin K-dependent carboxylase. The modified residues are necessary for the calcium-dependent interaction with a negatively charged phospholipid surface, which is essential for the conversion of prothrombin to thrombin. Post-translationally, N-glycosylated. N-glycan heterogeneity at Asn-121: Hex3HexNAc3 (minor), Hex4HexNAc3 (minor) and Hex5HexNAc4 (major). At Asn-143: Hex4HexNAc3 (minor) and Hex5HexNAc4 (major). In the penultimate step of the coagulation cascade, prothrombin is converted to thrombin by the prothrombinase complex composed of factor Xa (F10), cofactor Va (F5), and phospholipids. This activation requires factor Xa-catalyzed sequential cleavage at 2 sites, Arg-314 and Arg-363, along 2 possible pathways. In the first pathway, the first cleavage occurs at Arg-314, leading to the formation of the inactive intermediate prethrombin-2. This pathway preferentially occurs on platelets and in the absence of cofactor Va. In the second pathway, the first cleavage occurs at Arg-363, which separates protease domain into 2 chains that remain connected through a disulfide bond and generates the active intermediate meizothrombin. The presence of cofactor Va directs activation along the meizothrombin pathway and greatly accelerates the rate of cleavage at Arg-363, but has a smaller effect on the cleavage of meizothrombin at Arg-314. Meizothrombin accumulates as an intermediate when prothrombinase is assembled on the membrane of red blood cells. Expressed by the liver and secreted in plasma.

The protein resides in the secreted. The protein localises to the extracellular space. The enzyme catalyses Selective cleavage of Arg-|-Gly bonds in fibrinogen to form fibrin and release fibrinopeptides A and B.. Activity is promoted in the presence of negatively charged surfaces, such as polyphosphate and dextran sulfate. Inhibited by SERPINA5. Its function is as follows. Thrombin, which cleaves bonds after Arg and Lys, converts fibrinogen to fibrin and activates factors V, VII, VIII, XIII, and, in complex with thrombomodulin, protein C. Functions in blood homeostasis, inflammation and wound healing. Activates coagulation factor XI (F11); activation is promoted by the contact with negatively charged surfaces. Triggers the production of pro-inflammatory cytokines, such as MCP-1/CCL2 and IL8/CXCL8, in endothelial cells. The protein is Prothrombin (F2) of Homo sapiens (Human).